We begin with the raw amino-acid sequence, 426 residues long: 4-hydroxy-3-methylbut-2-en-1-yl diphosphate synthase (flavodoxin) (426 aa).

Cys-310, Cys-313, Cys-356, and Glu-363 together coordinate [4Fe-4S] cluster.

It belongs to the IspG family. It depends on [4Fe-4S] cluster as a cofactor.

It carries out the reaction (2E)-4-hydroxy-3-methylbut-2-enyl diphosphate + oxidized [flavodoxin] + H2O + 2 H(+) = 2-C-methyl-D-erythritol 2,4-cyclic diphosphate + reduced [flavodoxin]. Its pathway is isoprenoid biosynthesis; isopentenyl diphosphate biosynthesis via DXP pathway; isopentenyl diphosphate from 1-deoxy-D-xylulose 5-phosphate: step 5/6. In terms of biological role, converts 2C-methyl-D-erythritol 2,4-cyclodiphosphate (ME-2,4cPP) into 1-hydroxy-2-methyl-2-(E)-butenyl 4-diphosphate. This chain is 4-hydroxy-3-methylbut-2-en-1-yl diphosphate synthase (flavodoxin), found in Rhodopseudomonas palustris (strain BisA53).